Consider the following 186-residue polypeptide: High mobility group protein B4 (186 aa).

2 DNA-binding regions (HMG box) span residues 9–79 (PKAN…MNYV) and 93–161 (PRRP…ELYR). The disordered stretch occupies residues 77 to 98 (NYVGKRKKRRKRDPQEPRRPPS).

This sequence belongs to the HMGB family.

The protein resides in the nucleus. It is found in the chromosome. The sequence is that of High mobility group protein B4 (HMGB4) from Homo sapiens (Human).